The primary structure comprises 184 residues: Endoribonuclease YbeY (184 aa).

2 stretches are compositionally biased toward acidic residues: residues 1–11 (MTVEVGADENP) and 19–29 (DGAGDESDDED). A disordered region spans residues 1–37 (MTVEVGADENPDFAHDETDGAGDESDDEDAQGRDPEL). Residues H146, H150, and H156 each coordinate Zn(2+).

The protein belongs to the endoribonuclease YbeY family. Zn(2+) serves as cofactor.

It is found in the cytoplasm. Its function is as follows. Single strand-specific metallo-endoribonuclease involved in late-stage 70S ribosome quality control and in maturation of the 3' terminus of the 16S rRNA. This Burkholderia mallei (strain ATCC 23344) protein is Endoribonuclease YbeY.